The sequence spans 1553 residues: Pre-mRNA cleavage complex 2 protein Pcf11 (1553 aa).

The residue at position 2 (serine 2) is an N-acetylserine. Residues 14–142 (AREDACRDYQ…ALDVRVNSLD (129 aa)) form the CID domain. Serine 120 carries the post-translational modification Phosphoserine. Threonine 121 carries the post-translational modification Phosphothreonine. The interval 167 to 186 (NKSPDEPSTPGTVVSSPSIS) is disordered. Serine 169 and serine 182 each carry phosphoserine. A compositionally biased stretch (low complexity) spans 174 to 186 (STPGTVVSSPSIS). Residues 208 to 235 (LLAKQKQLLELQQKKLELELEQAKAQLA) are a coiled coil. The tract at residues 265–648 (AVKTPHQVPV…KQQHRLSVDA (384 aa)) is disordered. A Glycyl lysine isopeptide (Lys-Gly) (interchain with G-Cter in SUMO2) cross-link involves residue lysine 291. Over residues 308-318 (HGKEQSHRKEF) the composition is skewed to basic and acidic residues. Positions 321-342 (NTINQSDIKTSKNVPSEKLNSS) are enriched in polar residues. Lysine 329 participates in a covalent cross-link: Glycyl lysine isopeptide (Lys-Gly) (interchain with G-Cter in SUMO2). 3 stretches are compositionally biased toward basic and acidic residues: residues 343-365 (KQEKSKSGERITKKELDQLDSKS), 381-422 (HTKD…DVKE), and 428-443 (EKKEKDEHMKSSEHRV). A Glycyl lysine isopeptide (Lys-Gly) (interchain with G-Cter in SUMO2) cross-link involves residue lysine 457. Over residues 476–487 (STRKRSRSRSPK) the composition is skewed to basic residues. Phosphoserine is present on residues serine 490, serine 495, serine 510, and serine 512. The span at 495–509 (SPKRRDRRSPKRRQR) shows a compositional bias: basic residues. Composition is skewed to basic and acidic residues over residues 530-568 (SHMEEFPPPSREERNIKRSAKQDVRDPRRLKKMDEDRPQ) and 600-616 (SGWEENKSLQQGDEHSK). Position 645 is a phosphoserine (serine 645). Lysine 654 is covalently cross-linked (Glycyl lysine isopeptide (Lys-Gly) (interchain with G-Cter in SUMO2)). The residue at position 705 (serine 705) is a Phosphoserine. The segment at 707 to 733 (FNDRFPLKRPRYEDSDKPFVDGPASRF) is disordered. Basic and acidic residues predominate over residues 716–725 (PRYEDSDKPF). Lysine 723 participates in a covalent cross-link: Glycyl lysine isopeptide (Lys-Gly) (interchain with G-Cter in SUMO2). Serine 777 bears the Phosphoserine mark. Threonine 785 is subject to Phosphothreonine. Serine 794 carries the phosphoserine modification. Residues arginine 805, arginine 820, and arginine 833 each carry the asymmetric dimethylarginine modification. Serine 851 bears the Phosphoserine mark. Residues 921–940 (HGPSGAAIRFDGPHGQPGGG) form a disordered region. Residues arginine 929, arginine 944, arginine 957, arginine 982, arginine 995, arginine 1008, arginine 1092, and arginine 1103 each carry the asymmetric dimethylarginine modification. Lysine 1276 is covalently cross-linked (Glycyl lysine isopeptide (Lys-Gly) (interchain with G-Cter in SUMO2)). A disordered region spans residues 1286–1313 (DSATAQVTEAVAQPPPEEDEDQNEDQDV). Positions 1301–1313 (PEEDEDQNEDQDV) are enriched in acidic residues. Residues lysine 1417, lysine 1509, lysine 1522, and lysine 1544 each participate in a glycyl lysine isopeptide (Lys-Gly) (interchain with G-Cter in SUMO2) cross-link. Residues 1516–1553 (CESPKVKEEQIDAPPACSEESVATPTEIKTESDTVESV) form a disordered region.

Associates with the phosphorylated CTD domain of POLR2A /RNA polymerase II. Phosphorylation at Ser-120 and/or Thr-121 by WNK1 weakens its association with POLR2A/RNA polymerase II, promoting transcript release from the chromatin template and mRNA export to the cytoplasm.

The protein localises to the nucleus. Its function is as follows. Component of pre-mRNA cleavage complex II, which promotes transcription termination by RNA polymerase II. The chain is Pre-mRNA cleavage complex 2 protein Pcf11 from Mus musculus (Mouse).